The primary structure comprises 193 residues: Probable type II restriction enzyme HpyAORF263P (193 aa).

Belongs to the BsaWI type II restriction endonuclease family.

It carries out the reaction Endonucleolytic cleavage of DNA to give specific double-stranded fragments with terminal 5'-phosphates.. Functionally, a P subtype probable restriction enzyme that recognizes the double-stranded sequence CCGG; the cleavage site is unknown. The protein is Probable type II restriction enzyme HpyAORF263P of Helicobacter pylori (strain ATCC 700392 / 26695) (Campylobacter pylori).